Here is a 27-residue protein sequence, read N- to C-terminus: Caerulein precursor fragment R5 (27 aa).

In terms of tissue distribution, expressed by the skin glands.

The protein localises to the secreted. Functionally, antimicrobial peptide. The chain is Caerulein precursor fragment R5 from Xenopus ruwenzoriensis (Uganda clawed frog).